Reading from the N-terminus, the 181-residue chain is ADP-ribosylation factor-like protein 1 (181 aa).

Glycine 2 carries N-myristoyl glycine lipidation. GTP is bound by residues glycine 24–threonine 31, threonine 45–threonine 48, glycine 70, asparagine 126–aspartate 129, and alanine 160–threonine 161. Positions 31 and 48 each coordinate Mg(2+).

It belongs to the small GTPase superfamily. Arf family. As to quaternary structure, the GTP-bound form interacts with GOLGA1. The GTP-bound form interacts with GOLGA4 and RGPD8. The GTP-bound form directly interacts with ARFIP2. Binds to SCOC, preferentially in its GTP-bound form. May interact with UNC119. Interacts with ARFIP1; this interaction directs ARFIP1 to the trans-Golgi membranes. Interacts with ARFGEF1 (via N-terminus).

It is found in the golgi apparatus membrane. The protein resides in the golgi apparatus. Its subcellular location is the trans-Golgi network membrane. The protein localises to the membrane. Its function is as follows. GTP-binding protein that recruits several effectors, such as golgins, arfaptins and Arf-GEFs to the trans-Golgi network, and modulates their functions at the Golgi complex. Plays thereby a role in a wide range of fundamental cellular processes, including cell polarity, innate immunity, or protein secretion mediated by arfaptins, which were shown to play a role in maintaining insulin secretion from pancreatic beta cells. This chain is ADP-ribosylation factor-like protein 1 (ARL1), found in Bos taurus (Bovine).